The following is a 451-amino-acid chain: UDP-N-acetylmuramoylalanine--D-glutamate ligase (451 aa).

118–124 is an ATP binding site; the sequence is GTKGKST.

This sequence belongs to the MurCDEF family.

Its subcellular location is the cytoplasm. It carries out the reaction UDP-N-acetyl-alpha-D-muramoyl-L-alanine + D-glutamate + ATP = UDP-N-acetyl-alpha-D-muramoyl-L-alanyl-D-glutamate + ADP + phosphate + H(+). Its pathway is cell wall biogenesis; peptidoglycan biosynthesis. In terms of biological role, cell wall formation. Catalyzes the addition of glutamate to the nucleotide precursor UDP-N-acetylmuramoyl-L-alanine (UMA). The chain is UDP-N-acetylmuramoylalanine--D-glutamate ligase from Borreliella afzelii (strain PKo) (Borrelia afzelii).